The sequence spans 102 residues: Large ribosomal subunit protein bL21 (102 aa).

The protein belongs to the bacterial ribosomal protein bL21 family. Part of the 50S ribosomal subunit. Contacts protein L20.

Functionally, this protein binds to 23S rRNA in the presence of protein L20. The chain is Large ribosomal subunit protein bL21 from Listeria monocytogenes serotype 4b (strain F2365).